The following is a 150-amino-acid chain: MLAQFDVNLVVLLVLLICGLLSQNAAVTIAAGVLIVIKITPLNQFFPYIQAHGLNLGILILTIGVLTPIASGKLSGESILKSFISFKSLVAIAIGLLVAWLGGRGVKLMSSQPDVVAGLLIGTVAGVALLRGVPVGPLIAAGLLSLFIGK.

4 helical membrane passes run 1–21 (MLAQ…CGLL), 45–65 (FFPY…TIGV), 83–103 (FISF…WLGG), and 115–135 (VVAG…GVPV).

The protein belongs to the UPF0756 family.

The protein resides in the cell membrane. The polypeptide is UPF0756 membrane protein ABSDF1616 (Acinetobacter baumannii (strain SDF)).